Reading from the N-terminus, the 294-residue chain is UDP-3-O-acyl-N-acetylglucosamine deacetylase (294 aa).

Residues histidine 75, histidine 232, and aspartate 236 each coordinate Zn(2+). Residue histidine 259 is the Proton donor of the active site.

It belongs to the LpxC family. Zn(2+) is required as a cofactor.

The catalysed reaction is a UDP-3-O-[(3R)-3-hydroxyacyl]-N-acetyl-alpha-D-glucosamine + H2O = a UDP-3-O-[(3R)-3-hydroxyacyl]-alpha-D-glucosamine + acetate. It participates in glycolipid biosynthesis; lipid IV(A) biosynthesis; lipid IV(A) from (3R)-3-hydroxytetradecanoyl-[acyl-carrier-protein] and UDP-N-acetyl-alpha-D-glucosamine: step 2/6. In terms of biological role, catalyzes the hydrolysis of UDP-3-O-myristoyl-N-acetylglucosamine to form UDP-3-O-myristoylglucosamine and acetate, the committed step in lipid A biosynthesis. The polypeptide is UDP-3-O-acyl-N-acetylglucosamine deacetylase (Campylobacter jejuni subsp. jejuni serotype O:2 (strain ATCC 700819 / NCTC 11168)).